Consider the following 209-residue polypeptide: Ribosomal RNA large subunit methyltransferase E (209 aa).

Residues Gly-63, Trp-65, Asp-83, Asp-99, and Asp-124 each coordinate S-adenosyl-L-methionine. Lys-164 (proton acceptor) is an active-site residue.

The protein belongs to the class I-like SAM-binding methyltransferase superfamily. RNA methyltransferase RlmE family.

The protein resides in the cytoplasm. The enzyme catalyses uridine(2552) in 23S rRNA + S-adenosyl-L-methionine = 2'-O-methyluridine(2552) in 23S rRNA + S-adenosyl-L-homocysteine + H(+). Specifically methylates the uridine in position 2552 of 23S rRNA at the 2'-O position of the ribose in the fully assembled 50S ribosomal subunit. In Shewanella loihica (strain ATCC BAA-1088 / PV-4), this protein is Ribosomal RNA large subunit methyltransferase E.